We begin with the raw amino-acid sequence, 121 residues long: Ribonuclease P protein component (121 aa).

It belongs to the RnpA family. As to quaternary structure, consists of a catalytic RNA component (M1 or rnpB) and a protein subunit.

The catalysed reaction is Endonucleolytic cleavage of RNA, removing 5'-extranucleotides from tRNA precursor.. Functionally, RNaseP catalyzes the removal of the 5'-leader sequence from pre-tRNA to produce the mature 5'-terminus. It can also cleave other RNA substrates such as 4.5S RNA. The protein component plays an auxiliary but essential role in vivo by binding to the 5'-leader sequence and broadening the substrate specificity of the ribozyme. The protein is Ribonuclease P protein component of Bifidobacterium adolescentis (strain ATCC 15703 / DSM 20083 / NCTC 11814 / E194a).